Reading from the N-terminus, the 218-residue chain is Protein-L-isoaspartate O-methyltransferase (218 aa).

Residue Ser-52 is part of the active site.

Belongs to the methyltransferase superfamily. L-isoaspartyl/D-aspartyl protein methyltransferase family.

It localises to the cytoplasm. The catalysed reaction is [protein]-L-isoaspartate + S-adenosyl-L-methionine = [protein]-L-isoaspartate alpha-methyl ester + S-adenosyl-L-homocysteine. Its function is as follows. Catalyzes the methyl esterification of L-isoaspartyl residues in peptides and proteins that result from spontaneous decomposition of normal L-aspartyl and L-asparaginyl residues. It plays a role in the repair and/or degradation of damaged proteins. The polypeptide is Protein-L-isoaspartate O-methyltransferase (Rhodopseudomonas palustris (strain ATCC BAA-98 / CGA009)).